Here is a 334-residue protein sequence, read N- to C-terminus: Holliday junction branch migration complex subunit RuvB (334 aa).

Positions 4–184 (ADRLISAEPI…FGIVQRLEFY (181 aa)) are large ATPase domain (RuvB-L). ATP-binding positions include Ile-23, Arg-24, Gly-65, Lys-68, Thr-69, Thr-70, 131–133 (EDY), Arg-174, Tyr-184, and Arg-221. A Mg(2+)-binding site is contributed by Thr-69. The interval 185–255 (QVADLQHIVS…VAMQALDMLN (71 aa)) is small ATPAse domain (RuvB-S). Positions 258-334 (AEGFDYMDRK…YKHFGMVREE (77 aa)) are head domain (RuvB-H). DNA contacts are provided by Arg-294, Arg-313, and Arg-318.

The protein belongs to the RuvB family. Homohexamer. Forms an RuvA(8)-RuvB(12)-Holliday junction (HJ) complex. HJ DNA is sandwiched between 2 RuvA tetramers; dsDNA enters through RuvA and exits via RuvB. An RuvB hexamer assembles on each DNA strand where it exits the tetramer. Each RuvB hexamer is contacted by two RuvA subunits (via domain III) on 2 adjacent RuvB subunits; this complex drives branch migration. In the full resolvosome a probable DNA-RuvA(4)-RuvB(12)-RuvC(2) complex forms which resolves the HJ.

It is found in the cytoplasm. It carries out the reaction ATP + H2O = ADP + phosphate + H(+). In terms of biological role, the RuvA-RuvB-RuvC complex processes Holliday junction (HJ) DNA during genetic recombination and DNA repair, while the RuvA-RuvB complex plays an important role in the rescue of blocked DNA replication forks via replication fork reversal (RFR). RuvA specifically binds to HJ cruciform DNA, conferring on it an open structure. The RuvB hexamer acts as an ATP-dependent pump, pulling dsDNA into and through the RuvAB complex. RuvB forms 2 homohexamers on either side of HJ DNA bound by 1 or 2 RuvA tetramers; 4 subunits per hexamer contact DNA at a time. Coordinated motions by a converter formed by DNA-disengaged RuvB subunits stimulates ATP hydrolysis and nucleotide exchange. Immobilization of the converter enables RuvB to convert the ATP-contained energy into a lever motion, pulling 2 nucleotides of DNA out of the RuvA tetramer per ATP hydrolyzed, thus driving DNA branch migration. The RuvB motors rotate together with the DNA substrate, which together with the progressing nucleotide cycle form the mechanistic basis for DNA recombination by continuous HJ branch migration. Branch migration allows RuvC to scan DNA until it finds its consensus sequence, where it cleaves and resolves cruciform DNA. This chain is Holliday junction branch migration complex subunit RuvB, found in Serratia proteamaculans (strain 568).